The chain runs to 290 residues: Acetylglutamate kinase (290 aa).

Substrate-binding positions include 60 to 61, R82, and N185; that span reads GG.

The protein belongs to the acetylglutamate kinase family. ArgB subfamily.

Its subcellular location is the cytoplasm. The catalysed reaction is N-acetyl-L-glutamate + ATP = N-acetyl-L-glutamyl 5-phosphate + ADP. It participates in amino-acid biosynthesis; L-arginine biosynthesis; N(2)-acetyl-L-ornithine from L-glutamate: step 2/4. Functionally, catalyzes the ATP-dependent phosphorylation of N-acetyl-L-glutamate. In Archaeoglobus fulgidus (strain ATCC 49558 / DSM 4304 / JCM 9628 / NBRC 100126 / VC-16), this protein is Acetylglutamate kinase.